The following is a 539-amino-acid chain: F-box only protein 31 (539 aa).

Residues 11–53 are disordered; that stretch reads GPSRGCRRRQQRRGPAETAAADSEPDTDPEEERIEASAGVGGG. Serine 33 is subject to Phosphoserine. A Phosphoserine; by PKB/AKT1 modification is found at serine 33. Over residues 33–43 the composition is skewed to acidic residues; it reads SEPDTDPEEER. Threonine 37 carries the phosphothreonine modification. Positions 64–69 match the D box motif; it reads RCSLLE. One can recognise an F-box domain in the interval 64-110; that stretch reads RCSLLELPPELLVEIFASLPGTDLPSLAQVCTKFRRILHTDTIWRRR. Residues cysteine 206, histidine 214, cysteine 230, and histidine 236 each contribute to the Zn(2+) site. Serine 278 is modified (phosphoserine; by ATM). Positions 297 to 299 match the DDL motif motif; the sequence is DDL. A compositionally biased stretch (basic and acidic residues) spans 377 to 397; it reads VRQEQQEGGHEAGEGRGRQGP. The disordered stretch occupies residues 377 to 446; the sequence is VRQEQQEGGH…PAQCGQGQPF (70 aa). Threonine 419 is modified (phosphothreonine; by MTOR). Serine 480 is modified (phosphoserine).

This sequence belongs to the FBXO31 family. As to quaternary structure, part of a SCF (SKP1-cullin-F-box) protein ligase complex SCF(FBXO31) composed of CUL1, SKP1, RBX1 and FBXO31. Interacts (when phosphorylated at Ser-33) with CDC20, promoting ubiquitination by the APC/C complex. In terms of processing, phosphorylation at Ser-278 by ATM following gamma-irradiation results in its stabilization. Phosphorylation at Thr-419 and Ser-480 in absence of stress promotes its ubiquitination and degradation by the SCF(FBXO46) complex. Phosphorylation at Ser-33 by AKT1 promotes association with CDC20 and ubiquitination by the APC/C complex. Ubiquitinated by the SCF(FBXO46) complex in absence of stress, promoting its degradation. Ubiquitinated by the APC/C complex following phosphorylation at Ser-33, leading to its degradation by the proteasome. Highly expressed in brain. Expressed at moderate levels in most tissues, except bone marrow.

Its subcellular location is the cytoplasm. It is found in the cytoskeleton. The protein localises to the microtubule organizing center. It localises to the centrosome. It participates in protein modification; protein ubiquitination. Functionally, substrate-recognition component of the SCF(FBXO31) protein ligase complex, which specifically mediates the ubiquitination of proteins amidated at their C-terminus in response to oxidative stress, leading to their degradation by the proteasome. FBXO31 specifically recognizes and binds C-terminal peptides bearing an amide: C-terminal amidation in response to oxidative stress takes place following protein fragmentation. The SCF(FBXO31) also plays a role in G1 arrest following DNA damage by mediating ubiquitination of phosphorylated cyclin-D1 (CCND1), promoting its degradation by the proteasome, resulting in G1 arrest. The SCF(FBXO31) complex is however not a major regulator of CCND1 stability during the G1/S transition. In response to genotoxic stress, the SCF(FBXO31) complex directs ubiquitination and degradation of phosphorylated MDM2, thereby promoting p53/TP53-mediated DNA damage response. SCF(FBXO31) complex is required for genomic integrity by catalyzing ubiquitination and degradation of cyclin-A (CCNA1 and/or CCNA2) during the G1 phase. In response to genotoxic stress, the SCF(FBXO31) complex directs ubiquitination and degradation of phosphorylated FBXO46 and MAP2K6. SCF(FBXO31) complex promotes ubiquitination and degradation of CDT1 during the G2 phase to prevent re-replication. The SCF(FBXO31) complex also mediates ubiquitination and degradation of DUSP6, OGT and PARD6A. In Homo sapiens (Human), this protein is F-box only protein 31.